The sequence spans 237 residues: Necrosis-inducing protein NPP1 (237 aa).

The N-terminal stretch at 1 to 19 is a signal peptide; that stretch reads MNVLTFLIAAAVSLAVVQA. Asn-67 is a glycosylation site (N-linked (GlcNAc...) asparagine). Residues 103–113 carry the Conserved undecapeptide motif motif; the sequence is AIMYSWYFPKD. The Conserved heptapetpide motif signature appears at 120 to 126; sequence GHRHDWE.

Belongs to the Necrosis inducing protein (NPP1) family.

It localises to the secreted. Its function is as follows. Secreted effector that acts as a pathogen-associated molecular pattern (PAMP) recognized by the plant immune system. Induces necrotic cell death and ethylene biosynthesis in parsley. Stimulates early induced host cellular responses implicated in elicitor signal transmission such as increased levels of cytoplasmic calcium, production of reactive oxygen species (ROS), and MAP kinase activation. Infiltration of NPP1 into leaves of Arabidopsis thaliana results in transcript accumulation of pathogenesis-related (PR) genes, production of ROS and ethylene, callose apposition, and hypersensitive response (HR)-like cell death. NPP1-mediated induction of the PR1 gene is salicylic acid-dependent, and requires both functional NDR1 and PAD4. The polypeptide is Necrosis-inducing protein NPP1 (Phytophthora nicotianae (Potato buckeye rot agent)).